We begin with the raw amino-acid sequence, 233 residues long: Type IV secretion system protein PtlE homolog (233 aa).

The chain crosses the membrane as a helical span at residues 42-62; sequence VAWAALAVTALSLIAIATMLP.

This sequence belongs to the virB8 family.

It is found in the cell inner membrane. This is Type IV secretion system protein PtlE homolog (ptlE) from Bordetella parapertussis (strain 12822 / ATCC BAA-587 / NCTC 13253).